A 433-amino-acid polypeptide reads, in one-letter code: 23S rRNA (uracil(1939)-C(5))-methyltransferase RlmD (433 aa).

A TRAM domain is found at Arg10–Arg68. Interaction with RNA stretches follow at residues Asp23–Phe40 and Lys58–Arg63. [4Fe-4S] cluster contacts are provided by Cys81, Cys87, Cys90, and Cys162. The S-adenosyl-L-methionine site is built by Gln265, Phe294, Asn299, Glu315, Asn342, and Asp363. The active-site Nucleophile is the Cys389.

The protein belongs to the class I-like SAM-binding methyltransferase superfamily. RNA M5U methyltransferase family. RlmD subfamily.

It catalyses the reaction uridine(1939) in 23S rRNA + S-adenosyl-L-methionine = 5-methyluridine(1939) in 23S rRNA + S-adenosyl-L-homocysteine + H(+). Its function is as follows. Catalyzes the formation of 5-methyl-uridine at position 1939 (m5U1939) in 23S rRNA. The sequence is that of 23S rRNA (uracil(1939)-C(5))-methyltransferase RlmD from Escherichia coli (strain K12).